Reading from the N-terminus, the 210-residue chain is Large ribosomal subunit protein uL4 (210 aa).

A disordered region spans residues 44–79 (QHQGTHKVKTRSEVSGGGRKPYRQKGTGNARRGSSR).

The protein belongs to the universal ribosomal protein uL4 family. In terms of assembly, part of the 50S ribosomal subunit.

Functionally, one of the primary rRNA binding proteins, this protein initially binds near the 5'-end of the 23S rRNA. It is important during the early stages of 50S assembly. It makes multiple contacts with different domains of the 23S rRNA in the assembled 50S subunit and ribosome. In terms of biological role, forms part of the polypeptide exit tunnel. This is Large ribosomal subunit protein uL4 from Chloroherpeton thalassium (strain ATCC 35110 / GB-78).